A 158-amino-acid chain; its full sequence is MAARCPVGVASVLLLIVLVTVASAASGARSGGGGGGGIRELRGGGAGRRVGGRTEVRDVEGDREVQELGRFSVEEHNRRRRSRDCGDVRLEFGRVVAAQRQVVSGLKYYLRVAAAEEGAAGQNGGEPRVFDAVVVVKPWLESRTLLTFAPAADSPNES.

Residues 1–24 (MAARCPVGVASVLLLIVLVTVASA) form the signal peptide. Residues 26–51 (SGARSGGGGGGGIRELRGGGAGRRVG) are disordered. Gly residues predominate over residues 29–49 (RSGGGGGGGIRELRGGGAGRR). The 66-residue stretch at 51–116 (GGRTEVRDVE…KYYLRVAAAE (66 aa)) folds into the Cystatin domain. The short motif at 101-105 (QVVSG) is the Secondary area of contact element.

It belongs to the cystatin family. Phytocystatin subfamily.

Its subcellular location is the secreted. Functionally, specific inhibitor of cysteine proteinases. Probably involved in the regulation of endogenous processes and in defense against pests and pathogens. The polypeptide is Cysteine proteinase inhibitor 4 (Oryza sativa subsp. japonica (Rice)).